The chain runs to 309 residues: Methyltransferase AacuQ (309 aa).

Residues 57–149 are methyltransferase domain; the sequence is DVGAGNGPYA…QLRPGGTFAC (93 aa).

The protein belongs to the methyltransferase superfamily.

Its pathway is secondary metabolite biosynthesis. In terms of biological role, methyltransferase; part of the gene cluster that mediates the biosynthesis of the tetrahydroxanthone dimer secalonic acid D. The pathway begins with the synthesis of atrochrysone thioester by the polyketide synthase AacuL. The atrochrysone carboxyl ACP thioesterase AacuM then breaks the thioester bond and releases the atrochrysone carboxylic acid from AacuL. Atrochrysone carboxylic acid is decarboxylated by the decarboxylase AacuI, and oxidized by the anthrone oxygenase AacuG to yield emodin. Emodin is then reduced to emodin hydroquinone by a yet unidentified oxidoreductase. A-ring reduction by the short chain dehydrogenase AacuN, dehydration by the scytalone dehydratase-like protein AacuK and probable spontaneous re-oxidation, results in overall deoxygenation to chrysophanol. Baeyer-Villiger oxidation by the Baeyer-Villiger monooxygenase (BVMO) AacuH then yields monodictyphenone. Monodictyphenone is transformed into compounds with the tetrahydroxanthone skeleton via methylesterification by the methyltransferase AacuQ, followed by the action of the flavin-dependent monooxygenase AacuC, the isomerase AacuP, and the short chain dehydrogenase/reductase AacuF or AacuD. AacuF and AacuD should accept the same compound as a substrate but perform the ketoreduction with a different stereoselectivity, thus yielding blennolides B and A, respectively. In the final step of the biosynthesis, the cytochrome P450 monooxygenase AacuE accepts blennolide B and/or blennolide A to conduct the dimerization reaction to furnish the tetrahydroxanthone dimers, secalonic acids D, B, and F. The sequence is that of Methyltransferase AacuQ from Aspergillus aculeatus (strain ATCC 16872 / CBS 172.66 / WB 5094).